The sequence spans 291 residues: Beta-lactamase CTX-M-25 (291 aa).

A signal peptide spans 1-30; the sequence is MMRKSVRRAMLMTTACVSLLLASVPLCAQA. Ser-73 (nucleophile; acyl-ester intermediate) is an active-site residue. Residues Lys-76, Ser-133, Glu-169, and Ser-240 each contribute to the a beta-lactam site.

Belongs to the class-A beta-lactamase family. As to quaternary structure, monomer.

The protein localises to the secreted. It carries out the reaction a beta-lactam + H2O = a substituted beta-amino acid. Inhibited by the beta-lactamase-blocking agents clavulanic acid and tazobactam; in the DH10B strain. In terms of biological role, extended-spectrum beta-lactamase (ESBL) which confers resistance to penicillins, as well as first, second and third-generation cephalosporins. Has cefotaxime-hydrolyzing activity. Inactive against cephalosporin antibiotic, cefoxitin, and the carbapenem, imipenem. The chain is Beta-lactamase CTX-M-25 from Escherichia coli.